The chain runs to 254 residues: 3-oxo-5-alpha-steroid 4-dehydrogenase 2 (254 aa).

Helical transmembrane passes span 8-28 (VPVL…LCLG), 72-92 (PRSL…AHYF), 146-166 (FSFG…SDYT), and 206-226 (LATW…FLGM).

The protein belongs to the steroid 5-alpha reductase family. As to expression, expressed in high levels in the prostate and many other androgen-sensitive tissues.

The protein localises to the microsome membrane. It is found in the endoplasmic reticulum membrane. The catalysed reaction is a 3-oxo-5alpha-steroid + NADP(+) = a 3-oxo-Delta(4)-steroid + NADPH + H(+). It carries out the reaction 17beta-hydroxy-5alpha-androstan-3-one + NADP(+) = testosterone + NADPH + H(+). The enzyme catalyses 5alpha-pregnane-3,20-dione + NADP(+) = progesterone + NADPH + H(+). Converts testosterone (T) into 5-alpha-dihydrotestosterone (DHT) and progesterone or corticosterone into their corresponding 5-alpha-3-oxosteroids. It plays a central role in sexual differentiation and androgen physiology. In Rattus norvegicus (Rat), this protein is 3-oxo-5-alpha-steroid 4-dehydrogenase 2 (Srd5a2).